A 150-amino-acid polypeptide reads, in one-letter code: Large ribosomal subunit protein eL19 (150 aa).

The disordered stretch occupies residues 55-89 (IKGQSRYRAKIRHEQKKKGRHRGPGSRKGKKTARM).

The protein belongs to the eukaryotic ribosomal protein eL19 family. Part of the 50S ribosomal subunit.

In terms of biological role, binds to the 23S rRNA. The chain is Large ribosomal subunit protein eL19 from Pyrococcus furiosus (strain ATCC 43587 / DSM 3638 / JCM 8422 / Vc1).